An 853-amino-acid polypeptide reads, in one-letter code: EF-hand domain-containing family member B (853 aa).

Disordered regions lie at residues Met1–Pro31 and Ala244–Ile266. 2 consecutive EF-hand domains span residues Gln581–His616 and Leu617–Ile652. Residues Asp594, Asp598, Glu605, Asp630, Asp632, Asp634, and Glu641 each coordinate Ca(2+).

In terms of assembly, microtubule inner protein component of sperm flagellar doublet microtubules. Interacts with STIM1 and ORAI1; the interactions take place upon Ca(2+)-store depletion and dissociate through a Ca(2+)-dependent mechanism. Interaction with STIM1 inhibits STIM1 interaction with SARAF.

It is found in the cytoplasm. The protein localises to the cytoskeleton. Its subcellular location is the cilium axoneme. The protein resides in the flagellum axoneme. Its function is as follows. Microtubule inner protein (MIP) part of the dynein-decorated doublet microtubules (DMTs) in cilia axoneme, which is required for motile cilia beating. Cytosolic sensor for calcium, modulates the interaction of STIM1 and ORAI1 upon store depletion and the activation of store-operated Ca(2+) entry (SOCE) and NFAT translocation from cytosol to nucleus. This Mus musculus (Mouse) protein is EF-hand domain-containing family member B.